Consider the following 95-residue polypeptide: Progonadoliberin-1 (95 aa).

Positions 1 to 23 are cleaved as a signal peptide; that stretch reads MAPQTSNLWLLLVVMMVMSQGCC. Pyrrolidone carboxylic acid is present on glutamine 24. Glycine 33 carries the post-translational modification Glycine amide.

It belongs to the GnRH family.

It localises to the secreted. Functionally, stimulates the secretion of gonadotropins. The protein is Progonadoliberin-1 (gnrh1) of Pagrus major (Red sea bream).